Consider the following 453-residue polypeptide: Bifunctional protein GlmU (453 aa).

Residues 1–226 (MKFSAVILAA…PIEVEGVNDR (226 aa)) are pyrophosphorylase. UDP-N-acetyl-alpha-D-glucosamine is bound by residues 8 to 11 (LAAG), Lys22, Gln73, 78 to 79 (GT), 100 to 102 (YGD), Gly137, Glu151, Asn166, and Asn224. Residue Asp102 coordinates Mg(2+). Asn224 serves as a coordination point for Mg(2+). Positions 227 to 247 (AQLARLERAFQAAQAKKLLEQ) are linker. The N-acetyltransferase stretch occupies residues 248-453 (GVMLRDPARF…TGWQRPVKKK (206 aa)). The UDP-N-acetyl-alpha-D-glucosamine site is built by Arg330 and Lys348. The active-site Proton acceptor is the His360. Residues Tyr363 and Asn374 each coordinate UDP-N-acetyl-alpha-D-glucosamine. Residues Ala377, 383–384 (NY), Ser402, Ala420, and Arg437 each bind acetyl-CoA.

The protein in the N-terminal section; belongs to the N-acetylglucosamine-1-phosphate uridyltransferase family. It in the C-terminal section; belongs to the transferase hexapeptide repeat family. Homotrimer. Mg(2+) is required as a cofactor.

It localises to the cytoplasm. It catalyses the reaction alpha-D-glucosamine 1-phosphate + acetyl-CoA = N-acetyl-alpha-D-glucosamine 1-phosphate + CoA + H(+). It carries out the reaction N-acetyl-alpha-D-glucosamine 1-phosphate + UTP + H(+) = UDP-N-acetyl-alpha-D-glucosamine + diphosphate. Its pathway is nucleotide-sugar biosynthesis; UDP-N-acetyl-alpha-D-glucosamine biosynthesis; N-acetyl-alpha-D-glucosamine 1-phosphate from alpha-D-glucosamine 6-phosphate (route II): step 2/2. It participates in nucleotide-sugar biosynthesis; UDP-N-acetyl-alpha-D-glucosamine biosynthesis; UDP-N-acetyl-alpha-D-glucosamine from N-acetyl-alpha-D-glucosamine 1-phosphate: step 1/1. The protein operates within bacterial outer membrane biogenesis; LPS lipid A biosynthesis. Catalyzes the last two sequential reactions in the de novo biosynthetic pathway for UDP-N-acetylglucosamine (UDP-GlcNAc). The C-terminal domain catalyzes the transfer of acetyl group from acetyl coenzyme A to glucosamine-1-phosphate (GlcN-1-P) to produce N-acetylglucosamine-1-phosphate (GlcNAc-1-P), which is converted into UDP-GlcNAc by the transfer of uridine 5-monophosphate (from uridine 5-triphosphate), a reaction catalyzed by the N-terminal domain. The protein is Bifunctional protein GlmU of Vibrio vulnificus (strain CMCP6).